The sequence spans 559 residues: Small ribosomal subunit protein bS1 (559 aa).

S1 motif domains follow at residues 21–87, 105–171, 192–260, 277–347, 364–434, and 451–520; these read GAII…LSRE, DEVV…VSRR, GQQV…LGLK, GTRV…LGIK, GDRI…LGIK, and GSIV…LSVK.

Belongs to the bacterial ribosomal protein bS1 family.

Binds mRNA; thus facilitating recognition of the initiation point. It is needed to translate mRNA with a short Shine-Dalgarno (SD) purine-rich sequence. This Pseudomonas aeruginosa (strain ATCC 15692 / DSM 22644 / CIP 104116 / JCM 14847 / LMG 12228 / 1C / PRS 101 / PAO1) protein is Small ribosomal subunit protein bS1 (rpsA).